A 2133-amino-acid polypeptide reads, in one-letter code: Coagulation factor VIII (2133 aa).

Positions 1-19 (MQLELSTCVFLCLLPLGFS) are cleaved as a signal peptide. Plastocyanin-like domains follow at residues 20-199 (AIRR…LLVC), 207-357 (ERTQ…QLRR), 399-573 (KTWV…LLIC), and 583-730 (NQMM…VYSC). F5/8 type A domains follow at residues 20-357 (AIRR…QLRR) and 399-730 (KTWV…VYSC). A disulfide bond links cysteine 173 and cysteine 199. N-linked (GlcNAc...) asparagine glycosylation is found at asparagine 233 and asparagine 259. Residues cysteine 547 and cysteine 573 are joined by a disulfide bond. Asparagine 601 is a glycosylation site (N-linked (GlcNAc...) asparagine). A sulfotyrosine mark is found at tyrosine 737, tyrosine 738, and tyrosine 742. 2 disordered regions span residues 760-790 (SFAQ…LDPQ) and 804-914 (PSGD…PHPQ). Positions 760–1599 (SFAQNSRPPS…LISYPDDQEQ (840 aa)) are b. Residues 761–780 (FAQNSRPPSASQKQFQTITS) are compositionally biased toward polar residues. Basic and acidic residues-rich tracts occupy residues 853–862 (LRPELHHSAE) and 868–878 (EPEKELKKLDS). Low complexity predominate over residues 879 to 888 (KMSSSSDLLK). Over residues 889-900 (TSPTIPSDTLSA) the composition is skewed to polar residues. N-linked (GlcNAc...) asparagine glycans are attached at residues asparagine 929, asparagine 985, and asparagine 1025. The disordered stretch occupies residues 1042–1078 (LGKNPLSSERGPSPELLTSSGSGKSVKGQSSGQGRIR). Low complexity predominate over residues 1060–1075 (SSGSGKSVKGQSSGQG). Asparagine 1111 carries N-linked (GlcNAc...) asparagine glycosylation. Residues 1160 to 1179 (PSVEGFDGGSHAPVPQDSRS) form a disordered region. Residues asparagine 1181, asparagine 1208, asparagine 1245, asparagine 1265, and asparagine 1335 are each glycosylated (N-linked (GlcNAc...) asparagine). The interval 1200–1221 (EAPLEAPGNRTGPGPRSAVPRR) is disordered. Disordered regions lie at residues 1358-1391 (LNKV…KSTA) and 1406-1441 (ESNH…APKP). Residues 1378–1387 (KEWESLEKSP) show a composition bias toward basic and acidic residues. N-linked (GlcNAc...) asparagine glycans are attached at residues asparagine 1408 and asparagine 1611. Plastocyanin-like domains follow at residues 1495-1659 (RTRH…LLIC) and 1669-1822 (GRQV…SKEC). The F5/8 type A 3 domain maps to 1495–1822 (RTRHYFIAAV…TTFLVYSKEC (328 aa)). 3 cysteine pairs are disulfide-bonded: cysteine 1633–cysteine 1659, cysteine 1822–cysteine 1970, and cysteine 1975–cysteine 2127. 2 consecutive F5/8 type C domains span residues 1822–1970 (CQAP…LMGC) and 1975–2127 (CSMP…VLGC). A glycan (N-linked (GlcNAc...) asparagine) is linked at asparagine 1919.

Belongs to the multicopper oxidase family. Interacts with vWF. vWF binding is essential for the stabilization of F8 in circulation. Post-translationally, proteolytically cleaved by cathepsin CTSG to produce a partially activated form.

The protein resides in the secreted. It localises to the extracellular space. Functionally, factor VIII, along with calcium and phospholipid, acts as a cofactor for factor IXa when it converts factor X to the activated form, factor Xa. The polypeptide is Coagulation factor VIII (F8) (Sus scrofa (Pig)).